Reading from the N-terminus, the 178-residue chain is Interleukin-10 (178 aa).

The N-terminal stretch at 1-18 is a signal peptide; it reads MHSSALLCCLVLLTGVRA. Disulfide bonds link Cys-30–Cys-126 and Cys-80–Cys-132. The N-linked (GlcNAc...) asparagine glycan is linked to Asn-134.

The protein belongs to the IL-10 family. Homodimer. Interacts with IL10RA and IL10RB.

It localises to the secreted. Functionally, major immune regulatory cytokine that acts on many cells of the immune system where it has profound anti-inflammatory functions, limiting excessive tissue disruption caused by inflammation. Mechanistically, IL10 binds to its heterotetrameric receptor comprising IL10RA and IL10RB leading to JAK1 and STAT2-mediated phosphorylation of STAT3. In turn, STAT3 translocates to the nucleus where it drives expression of anti-inflammatory mediators. Targets antigen-presenting cells (APCs) such as macrophages and monocytes and inhibits their release of pro-inflammatory cytokines including granulocyte-macrophage colony-stimulating factor /GM-CSF, granulocyte colony-stimulating factor/G-CSF, IL-1 alpha, IL-1 beta, IL-6, IL-8 and TNF-alpha. Also interferes with antigen presentation by reducing the expression of MHC-class II and co-stimulatory molecules, thereby inhibiting their ability to induce T cell activation. In addition, controls the inflammatory response of macrophages by reprogramming essential metabolic pathways including mTOR signaling. The protein is Interleukin-10 (IL10) of Cercocebus atys (Sooty mangabey).